Reading from the N-terminus, the 205-residue chain is Dephospho-CoA kinase (205 aa).

Positions 7-205 (IIGITGRIAS…QEIINYERFE (199 aa)) constitute a DPCK domain. ATP is bound at residue 15 to 20 (ASGKDA).

Belongs to the CoaE family.

Its subcellular location is the cytoplasm. It carries out the reaction 3'-dephospho-CoA + ATP = ADP + CoA + H(+). It functions in the pathway cofactor biosynthesis; coenzyme A biosynthesis; CoA from (R)-pantothenate: step 5/5. In terms of biological role, catalyzes the phosphorylation of the 3'-hydroxyl group of dephosphocoenzyme A to form coenzyme A. The sequence is that of Dephospho-CoA kinase from Borrelia garinii subsp. bavariensis (strain ATCC BAA-2496 / DSM 23469 / PBi) (Borreliella bavariensis).